We begin with the raw amino-acid sequence, 313 residues long: 4-hydroxy-3-methylbut-2-enyl diphosphate reductase (313 aa).

A [4Fe-4S] cluster-binding site is contributed by cysteine 12. (2E)-4-hydroxy-3-methylbut-2-enyl diphosphate-binding residues include histidine 41 and histidine 74. Residues histidine 41 and histidine 74 each coordinate dimethylallyl diphosphate. The isopentenyl diphosphate site is built by histidine 41 and histidine 74. Cysteine 96 contacts [4Fe-4S] cluster. Position 124 (histidine 124) interacts with (2E)-4-hydroxy-3-methylbut-2-enyl diphosphate. Residue histidine 124 participates in dimethylallyl diphosphate binding. Histidine 124 serves as a coordination point for isopentenyl diphosphate. Catalysis depends on glutamate 126, which acts as the Proton donor. Threonine 167 contributes to the (2E)-4-hydroxy-3-methylbut-2-enyl diphosphate binding site. Cysteine 197 is a [4Fe-4S] cluster binding site. Serine 225, serine 226, asparagine 227, and serine 269 together coordinate (2E)-4-hydroxy-3-methylbut-2-enyl diphosphate. Dimethylallyl diphosphate-binding residues include serine 225, serine 226, asparagine 227, and serine 269. Residues serine 225, serine 226, asparagine 227, and serine 269 each coordinate isopentenyl diphosphate.

This sequence belongs to the IspH family. In terms of assembly, homodimer. [4Fe-4S] cluster serves as cofactor.

The catalysed reaction is isopentenyl diphosphate + 2 oxidized [2Fe-2S]-[ferredoxin] + H2O = (2E)-4-hydroxy-3-methylbut-2-enyl diphosphate + 2 reduced [2Fe-2S]-[ferredoxin] + 2 H(+). It catalyses the reaction dimethylallyl diphosphate + 2 oxidized [2Fe-2S]-[ferredoxin] + H2O = (2E)-4-hydroxy-3-methylbut-2-enyl diphosphate + 2 reduced [2Fe-2S]-[ferredoxin] + 2 H(+). Its pathway is isoprenoid biosynthesis; dimethylallyl diphosphate biosynthesis; dimethylallyl diphosphate from (2E)-4-hydroxy-3-methylbutenyl diphosphate: step 1/1. The protein operates within isoprenoid biosynthesis; isopentenyl diphosphate biosynthesis via DXP pathway; isopentenyl diphosphate from 1-deoxy-D-xylulose 5-phosphate: step 6/6. Functionally, catalyzes the conversion of 1-hydroxy-2-methyl-2-(E)-butenyl 4-diphosphate (HMBPP) into a mixture of isopentenyl diphosphate (IPP) and dimethylallyl diphosphate (DMAPP). Acts in the terminal step of the DOXP/MEP pathway for isoprenoid precursor biosynthesis. The polypeptide is 4-hydroxy-3-methylbut-2-enyl diphosphate reductase (Buchnera aphidicola subsp. Schizaphis graminum (strain Sg)).